Consider the following 211-residue polypeptide: ATP phosphoribosyltransferase (211 aa).

It belongs to the ATP phosphoribosyltransferase family. Short subfamily. Heteromultimer composed of HisG and HisZ subunits.

The protein resides in the cytoplasm. It carries out the reaction 1-(5-phospho-beta-D-ribosyl)-ATP + diphosphate = 5-phospho-alpha-D-ribose 1-diphosphate + ATP. The protein operates within amino-acid biosynthesis; L-histidine biosynthesis; L-histidine from 5-phospho-alpha-D-ribose 1-diphosphate: step 1/9. Its function is as follows. Catalyzes the condensation of ATP and 5-phosphoribose 1-diphosphate to form N'-(5'-phosphoribosyl)-ATP (PR-ATP). Has a crucial role in the pathway because the rate of histidine biosynthesis seems to be controlled primarily by regulation of HisG enzymatic activity. The sequence is that of ATP phosphoribosyltransferase from Pseudomonas entomophila (strain L48).